We begin with the raw amino-acid sequence, 397 residues long: 3-ketoacyl-CoA thiolase, mitochondrial (397 aa).

A mitochondrion; not cleaved-targeting transit peptide spans 1 to 16 (MALLRGVFIVAAKRTP). The residue at position 25 (K25) is an N6-acetyllysine; alternate. K25 carries the N6-succinyllysine; alternate modification. Residue S28 is modified to Phosphoserine. The residue at position 45 (K45) is an N6-succinyllysine. Catalysis depends on C92, which acts as the Acyl-thioester intermediate. The residue at position 119 (T119) is a Phosphothreonine. S121 is subject to Phosphoserine. The residue at position 127 (Y127) is a Phosphotyrosine. T136 carries the phosphothreonine modification. N6-acetyllysine; alternate occurs at positions 137, 143, 158, 171, 191, and 209. N6-succinyllysine; alternate occurs at positions 137, 143, 158, 171, 191, and 209. N6-succinyllysine is present on residues K211, K212, and K214. CoA-binding residues include R224 and T227. K234 bears the N6-acetyllysine; alternate mark. An N6-succinyllysine; alternate modification is found at K234. At K240 the chain carries N6-succinyllysine. K241 bears the N6-acetyllysine mark. S251 contacts CoA. N6-acetyllysine occurs at positions 269 and 270. K305 is subject to N6-acetyllysine; alternate. K305 carries the N6-succinyllysine; alternate modification. A Phosphoserine modification is found at S310. K312 is modified (N6-acetyllysine; alternate). Position 312 is an N6-succinyllysine; alternate (K312). The residue at position 340 (K340) is an N6-acetyllysine. S344 is modified (phosphoserine). The residue at position 375 (K375) is an N6-acetyllysine. Catalysis depends on C382, which acts as the Proton donor/acceptor.

It belongs to the thiolase-like superfamily. Thiolase family. Homotetramer. Interacts with BNIP3.

Its subcellular location is the mitochondrion. It carries out the reaction an acyl-CoA + acetyl-CoA = a 3-oxoacyl-CoA + CoA. The catalysed reaction is 2 acetyl-CoA = acetoacetyl-CoA + CoA. It catalyses the reaction acetyl-CoA + H2O = acetate + CoA + H(+). The enzyme catalyses propanoyl-CoA + H2O = propanoate + CoA + H(+). It carries out the reaction butanoyl-CoA + H2O = butanoate + CoA + H(+). The catalysed reaction is hexanoyl-CoA + H2O = hexanoate + CoA + H(+). It catalyses the reaction octanoyl-CoA + H2O = octanoate + CoA + H(+). The enzyme catalyses decanoyl-CoA + H2O = decanoate + CoA + H(+). It carries out the reaction dodecanoyl-CoA + H2O = dodecanoate + CoA + H(+). The catalysed reaction is tetradecanoyl-CoA + H2O = tetradecanoate + CoA + H(+). It catalyses the reaction hexadecanoyl-CoA + H2O = hexadecanoate + CoA + H(+). It participates in lipid metabolism; fatty acid beta-oxidation. In the production of energy from fats, this is one of the enzymes that catalyzes the last step of the mitochondrial beta-oxidation pathway, an aerobic process breaking down fatty acids into acetyl-CoA. Using free coenzyme A/CoA, catalyzes the thiolytic cleavage of medium- to long-chain unbranched 3-oxoacyl-CoAs into acetyl-CoA and a fatty acyl-CoA shortened by two carbon atoms. Also catalyzes the condensation of two acetyl-CoA molecules into acetoacetyl-CoA and could be involved in the production of ketone bodies. Also displays hydrolase activity on various fatty acyl-CoAs. Thereby, could be responsible for the production of acetate in a side reaction to beta-oxidation. Abolishes BNIP3-mediated apoptosis and mitochondrial damage. The chain is 3-ketoacyl-CoA thiolase, mitochondrial (Acaa2) from Mus musculus (Mouse).